Reading from the N-terminus, the 505-residue chain is MWMRRNQIVRKLTLGVVTTVLGMSLSFSALSATPVETHGQLSIENGRLVDEQGKRVQLRGISSHGLQWFGDYVNKDSMKWLRDDWGINVFRVAMYTAADGYISNPSLANKVKEAVAAAQSLGVYIIIDWHILSDNDPNIYKAQAKTFFAEMAGLYGSSPNVIYEIANEPNGGVTWNGQIRPYALEVTDTIRSKDPDNLIIVGTGTWSQDIHDAADNQLPDPNTMYALHFYAGTHGQFLRDRIDYAQSRGAAIFVSEWGTSDASGNGGPFLPESQTWIDFLNNRGVSWVNWSLTDKSEASAALAPGASKSGGWTEQNLSTSGKFVREQIRAGANLGGGDTPTTPTEPTNPGNGTTGDVVLQYRNVDNNPSDDAIRMAVNIKNTGSTPIKLSDLQVRYYFHDDGKPGANLFVDWANVGPNNIVTSTGTPAASTDKANRYVLVTFSSGAGSLQPGAETGEVQVRIHAGDWSNVNETNDYSYGANVTSYANWDKITVHDKGTLVWGVEP.

Positions 1 to 31 (MWMRRNQIVRKLTLGVVTTVLGMSLSFSALS) are cleaved as a signal peptide. Positions 32–334 (ATPVETHGQL…REQIRAGANL (303 aa)) are catalytic. Residues His64, 68 to 69 (WF), Tyr95, and His130 contribute to the substrate site. Glu168 functions as the Proton donor in the catalytic mechanism. Tyr230 is a binding site for substrate. The active-site Nucleophile is Glu256. Residues 262–263 (AS), Trp290, and 295–297 (KSE) contribute to the substrate site. Residues 332–355 (ANLGGGDTPTTPTEPTNPGNGTTG) are disordered. The tract at residues 335-352 (GGGDTPTTPTEPTNPGNG) is linker. The span at 339–355 (TPTTPTEPTNPGNGTTG) shows a compositional bias: low complexity. One can recognise a CBM3 domain in the interval 353–505 (TTGDVVLQYR…KGTLVWGVEP (153 aa)).

It belongs to the glycosyl hydrolase 5 (cellulase A) family.

It is found in the secreted. The enzyme catalyses Endohydrolysis of (1-&gt;4)-beta-D-glucosidic linkages in cellulose, lichenin and cereal beta-D-glucans.. In terms of biological role, endoglucanase with some exoglucanase activity. The polypeptide is Endoglucanase 5 (celV) (Pectobacterium carotovorum subsp. carotovorum (Erwinia carotovora subsp. carotovora)).